A 607-amino-acid chain; its full sequence is UvrABC system protein C (607 aa).

The GIY-YIG domain occupies 12 to 91 (DSPGVYLYKD…IKRYRPRYNI (80 aa)). The UVR domain maps to 200–235 (ENLIKKLKKEMAIASDNLEFERAAKLRDQILALEKI).

Belongs to the UvrC family. In terms of assembly, interacts with UvrB in an incision complex.

It localises to the cytoplasm. Its function is as follows. The UvrABC repair system catalyzes the recognition and processing of DNA lesions. UvrC both incises the 5' and 3' sides of the lesion. The N-terminal half is responsible for the 3' incision and the C-terminal half is responsible for the 5' incision. The chain is UvrABC system protein C from Carboxydothermus hydrogenoformans (strain ATCC BAA-161 / DSM 6008 / Z-2901).